A 372-amino-acid chain; its full sequence is MTRAHNATLESIQYARGTLRLLDQRKLPFETVFDEILTVDDIWTAIKEMRVRGAPAIAVSAALAIAVAAGNELKKNDGACNSVDGTRRFLLESCDTVMTARPTAVNLSKTLIRLKRDIADVTANTAGGLVEACAVLAEKIYAEDVAYNEGIMRHGAAHVTQLVKKSKVSVITICNTGALATSRYGTALGVVRQLFYEGKLEQVYACETRPWNQGARLTVYECVQENIPFTLICDSAVSALMGSRPIDAVIVGADRICRNGDTANKIGTCNLAVAAAHYGVPFFVAAPSTTLDPMTADGESVVIEERETMELTHNMATQQRVVAEGPSLRIWNPVFDITPAALVTGGIITERGVLQPSATAPFFDITRIVGAS.

Catalysis depends on aspartate 254, which acts as the Proton donor.

It belongs to the eIF-2B alpha/beta/delta subunits family. MtnA subfamily.

It is found in the cytoplasm. The protein resides in the nucleus. The catalysed reaction is 5-(methylsulfanyl)-alpha-D-ribose 1-phosphate = 5-(methylsulfanyl)-D-ribulose 1-phosphate. It participates in amino-acid biosynthesis; L-methionine biosynthesis via salvage pathway; L-methionine from S-methyl-5-thio-alpha-D-ribose 1-phosphate: step 1/6. In terms of biological role, catalyzes the interconversion of methylthioribose-1-phosphate (MTR-1-P) into methylthioribulose-1-phosphate (MTRu-1-P). The chain is Methylthioribose-1-phosphate isomerase 1 from Trypanosoma cruzi (strain CL Brener).